Consider the following 100-residue polypeptide: Aspartyl/glutamyl-tRNA(Asn/Gln) amidotransferase subunit C (100 aa).

The protein belongs to the GatC family. In terms of assembly, heterotrimer of A, B and C subunits.

It catalyses the reaction L-glutamyl-tRNA(Gln) + L-glutamine + ATP + H2O = L-glutaminyl-tRNA(Gln) + L-glutamate + ADP + phosphate + H(+). The enzyme catalyses L-aspartyl-tRNA(Asn) + L-glutamine + ATP + H2O = L-asparaginyl-tRNA(Asn) + L-glutamate + ADP + phosphate + 2 H(+). Its function is as follows. Allows the formation of correctly charged Asn-tRNA(Asn) or Gln-tRNA(Gln) through the transamidation of misacylated Asp-tRNA(Asn) or Glu-tRNA(Gln) in organisms which lack either or both of asparaginyl-tRNA or glutaminyl-tRNA synthetases. The reaction takes place in the presence of glutamine and ATP through an activated phospho-Asp-tRNA(Asn) or phospho-Glu-tRNA(Gln). The chain is Aspartyl/glutamyl-tRNA(Asn/Gln) amidotransferase subunit C from Rickettsia rickettsii (strain Sheila Smith).